The following is a 224-amino-acid chain: uncharacterized protein (224 aa).

The first 30 residues, 1–30, serve as a signal peptide directing secretion; sequence MSRSSSSMATVLVVLMVVSAGGLSPPCAAA. N-linked (GlcNAc...) asparagine glycosylation is present at asparagine 141.

The protein localises to the secreted. This is an uncharacterized protein from Oryza sativa subsp. japonica (Rice).